Consider the following 242-residue polypeptide: Lactate utilization protein A 2 (242 aa).

The protein belongs to the LutA/YkgE family.

In terms of biological role, is involved in L-lactate degradation and allows cells to grow with lactate as the sole carbon source. The chain is Lactate utilization protein A 2 from Bacillus cereus (strain AH820).